The primary structure comprises 585 residues: Bestrophin-1 (585 aa).

Residues 1–31 (MTITYTSQVANARLGSFSRLLLCWRGSIYKL) are Cytoplasmic-facing. Ala-10 is a binding site for Ca(2+). The helical transmembrane segment at 32-51 (LYGEFLIFLLCYYIIRFIYR) threads the bilayer. Topologically, residues 52–60 (LALTEEQQL) are extracellular. A helical transmembrane segment spans residues 61–82 (MFEKLTLYCDSYIQLIPISFVL). The Cytoplasmic portion of the chain corresponds to 83-237 (GFYVTLVVTR…DWISIPLVYT (155 aa)). A helical transmembrane segment spans residues 238-255 (QVVTVAVYSFFLTCLVGR). Over 256-274 (QFLNPAKAYPGHELDLVVP) the chain is Extracellular. A helical transmembrane segment spans residues 275-288 (VFTFLQFFFYVGWL). Residues 289–585 (KVAEQLINPF…ALENRDEAHS (297 aa)) are Cytoplasmic-facing. 4 residues coordinate Ca(2+): Gln-293, Asn-296, Asp-301, and Asp-304. Residues 346–379 (PYTAASAQFRRASFMGSTFNISLNKEEMEFQPNQ) form an auto-inhibitory segment region.

This sequence belongs to the anion channel-forming bestrophin (TC 1.A.46) family. Calcium-sensitive chloride channel subfamily. Interacts with YWHAG; this interaction promotes the ligand-gated L-glutamate channel activity leading to the positive regulation of NMDA glutamate receptor activity through the L-glutamate secretion. In terms of tissue distribution, predominantly expressed in the basolateral membrane of the retinal pigment epithelium.

Its subcellular location is the cell membrane. The protein resides in the basolateral cell membrane. It carries out the reaction chloride(in) = chloride(out). It catalyses the reaction hydrogencarbonate(in) = hydrogencarbonate(out). The catalysed reaction is 4-aminobutanoate(in) = 4-aminobutanoate(out). The enzyme catalyses L-glutamate(out) = L-glutamate(in). With respect to regulation, inactivated by sulfhydryl-reactive agents. Functionally, ligand-gated anion channel that allows the movement of anions across cell membranes when activated by calcium (Ca2+). Allows the movement of chloride and hydrogencarbonate. Found in a partially open conformation leading to significantly smaller chloride movement. Upon F2R/PAR-1 activation, the sequestered calcium is released into the cytosol of astrocytes, leading to the (Ca2+)-dependent release of L-glutamate into the synaptic cleft that targets the neuronal postsynaptic GRIN2A/NMDAR receptor resulting in the synaptic plasticity regulation. Upon activation of the norepinephrine-alpha-1 adrenergic receptor signaling pathway, transports as well D-serine than L-glutamate in a (Ca2+)-dependent manner, leading to activation of adjacent NMDAR receptors and therefore regulates the heterosynaptic long-term depression and metaplasticity during initial memory acquisition. Releases the 4-aminobutanoate neurotransmitter in a (Ca2+)-dependent manner, and participates in its tonic release from cerebellar glial cells. The sequence is that of Bestrophin-1 from Homo sapiens (Human).